A 127-amino-acid chain; its full sequence is Evasin-4 (127 aa).

Positions 1 to 23 (MAFKYWFVFAAVLYARQWLSTKC) are cleaved as a signal peptide. 4 disulfides stabilise this stretch: Cys-50/Cys-69, Cys-65/Cys-112, Cys-86/Cys-117, and Cys-107/Cys-126. Residues Asn-54, Asn-64, Asn-70, Asn-77, Asn-83, Asn-106, and Asn-114 are each glycosylated (N-linked (GlcNAc...) asparagine).

This sequence belongs to the evasin C8 family. In terms of assembly, monomer.

It localises to the secreted. Functionally, salivary chemokine-binding protein which has chemokine-neutralizing activity and binds to host chemokines CCL1, CCL3, CCL5, CCL7, CCL8, CCL11, CCL14, CCL15, CCL16, CCL17, CCL18, CCL19, CCL21, CCL22, CCL23, CCL24, CCL25 and CCL26 with nanomolar affinity. Binds to CCL3 and CCL5 with 1:1 stoichiometry. Although binding to CCL25 is observed, does not inhibit CCL25-induced chemotaxis. Has been shown to reduce cardiac injury and inflammation in mice through its anti-CCL5 activity. The chain is Evasin-4 from Rhipicephalus sanguineus (Brown dog tick).